The primary structure comprises 293 residues: Probable rRNA-processing protein EBP2 homolog (293 aa).

Over residues 1-37 (MSLEEDIVSDDEMNMIDEDDATDSEAESLSDSDTENE) the composition is skewed to acidic residues. Disordered stretches follow at residues 1 to 45 (MSLE…LAEP) and 150 to 293 (IEES…RQKR). Positions 135–190 (HMEKVKSRLLHEKKQIEESEERRKARDNKRMAKEVQSQKMKERAKEKKDNIESVKK) form a coiled coil. Composition is skewed to basic and acidic residues over residues 150–167 (IEESEERRKARDNKRMAK), 173–189 (KMKERAKEKKDNIESVK), and 247–256 (KKREFRDSKF). The span at 265-275 (SKQNTAETTND) shows a compositional bias: polar residues.

Belongs to the EBP2 family. In terms of assembly, interacts with NSN1.

It is found in the nucleus. The protein resides in the nucleolus. Its function is as follows. Required for the processing of the 27S pre-rRNA. Plays an important role in plant growth and senescence by modulating ribosome biogenesis in nucleolus. Associates with ribosomes. The chain is Probable rRNA-processing protein EBP2 homolog from Arabidopsis thaliana (Mouse-ear cress).